The chain runs to 251 residues: UPF0309 protein SCO4393 (251 aa).

An SIS domain is found at 36 to 220 (LADTVQNGGR…AATLADRGIE (185 aa)).

This sequence belongs to the UPF0309 family.

The protein is UPF0309 protein SCO4393 of Streptomyces coelicolor (strain ATCC BAA-471 / A3(2) / M145).